The sequence spans 311 residues: HPr kinase/phosphorylase (311 aa).

Catalysis depends on residues His-136 and Lys-157. 151–158 lines the ATP pocket; the sequence is GDSGIGKS. Residue Ser-158 participates in Mg(2+) binding. Asp-175 serves as the catalytic Proton acceptor; for phosphorylation activity. Proton donor; for dephosphorylation activity. The interval 199–208 is important for the catalytic mechanism of both phosphorylation and dephosphorylation; it reads LEIRGLGIIN. Glu-200 lines the Mg(2+) pocket. Residue Arg-241 is part of the active site. Residues 262–267 are important for the catalytic mechanism of dephosphorylation; the sequence is PVRPGR.

This sequence belongs to the HPrK/P family. In terms of assembly, homohexamer. Mg(2+) serves as cofactor.

It catalyses the reaction [HPr protein]-L-serine + ATP = [HPr protein]-O-phospho-L-serine + ADP + H(+). The catalysed reaction is [HPr protein]-O-phospho-L-serine + phosphate + H(+) = [HPr protein]-L-serine + diphosphate. In terms of biological role, catalyzes the ATP- as well as the pyrophosphate-dependent phosphorylation of a specific serine residue in HPr, a phosphocarrier protein of the phosphoenolpyruvate-dependent sugar phosphotransferase system (PTS). HprK/P also catalyzes the pyrophosphate-producing, inorganic phosphate-dependent dephosphorylation (phosphorolysis) of seryl-phosphorylated HPr (P-Ser-HPr). The two antagonistic activities of HprK/P are regulated by several intracellular metabolites, which change their concentration in response to the absence or presence of rapidly metabolisable carbon sources (glucose, fructose, etc.) in the growth medium. Therefore, by controlling the phosphorylation state of HPr, HPrK/P is a sensor enzyme that plays a major role in the regulation of carbon metabolism and sugar transport: it mediates carbon catabolite repression (CCR), and regulates PTS-catalyzed carbohydrate uptake and inducer exclusion. The sequence is that of HPr kinase/phosphorylase from Staphylococcus haemolyticus (strain JCSC1435).